The sequence spans 293 residues: Elongation factor Ts (293 aa).

The interval 80–83 (TDFV) is involved in Mg(2+) ion dislocation from EF-Tu.

The protein belongs to the EF-Ts family.

It localises to the cytoplasm. Functionally, associates with the EF-Tu.GDP complex and induces the exchange of GDP to GTP. It remains bound to the aminoacyl-tRNA.EF-Tu.GTP complex up to the GTP hydrolysis stage on the ribosome. The chain is Elongation factor Ts from Paraburkholderia xenovorans (strain LB400).